The sequence spans 296 residues: Beta-lactamase (296 aa).

The N-terminal stretch at 1-21 is a signal peptide; it reads MKAYFIAILTLFTCIATVVRA. S66 acts as the Acyl-ester intermediate in catalysis. 235–237 serves as a coordination point for substrate; that stretch reads KTG.

The protein belongs to the class-A beta-lactamase family.

It carries out the reaction a beta-lactam + H2O = a substituted beta-amino acid. The polypeptide is Beta-lactamase (cblA) (Bacteroides uniformis).